The chain runs to 297 residues: Tryptophan 2,3-dioxygenase (297 aa).

Residues 51 to 55 (FIIQH), tyrosine 113, and arginine 117 each bind substrate. Histidine 240 is a heme binding site. Substrate is bound at residue threonine 254.

The protein belongs to the tryptophan 2,3-dioxygenase family. Homotetramer. The cofactor is heme.

The catalysed reaction is L-tryptophan + O2 = N-formyl-L-kynurenine. The protein operates within amino-acid degradation; L-tryptophan degradation via kynurenine pathway; L-kynurenine from L-tryptophan: step 1/2. Heme-dependent dioxygenase that catalyzes the oxidative cleavage of the L-tryptophan (L-Trp) pyrrole ring and converts L-tryptophan to N-formyl-L-kynurenine. Catalyzes the oxidative cleavage of the indole moiety. This is Tryptophan 2,3-dioxygenase from Xanthomonas oryzae pv. oryzae (strain MAFF 311018).